The sequence spans 217 residues: tRNA (guanine-N(7)-)-methyltransferase (217 aa).

S-adenosyl-L-methionine contacts are provided by E48, E73, N100, and D123. Residue D123 is part of the active site. Residues K127 and D159 each contribute to the substrate site.

It belongs to the class I-like SAM-binding methyltransferase superfamily. TrmB family.

The enzyme catalyses guanosine(46) in tRNA + S-adenosyl-L-methionine = N(7)-methylguanosine(46) in tRNA + S-adenosyl-L-homocysteine. It functions in the pathway tRNA modification; N(7)-methylguanine-tRNA biosynthesis. In terms of biological role, catalyzes the formation of N(7)-methylguanine at position 46 (m7G46) in tRNA. This Leptospira borgpetersenii serovar Hardjo-bovis (strain JB197) protein is tRNA (guanine-N(7)-)-methyltransferase.